A 253-amino-acid chain; its full sequence is uncharacterized protein (253 aa).

The N-terminal stretch at 1–19 (MRYLKKVTIYISLLILVSG) is a signal peptide. A lipid anchor (N-palmitoyl cysteine) is attached at Cys20. Cys20 carries S-diacylglycerol cysteine lipidation.

This sequence belongs to the staphylococcal tandem lipoprotein family.

It localises to the cell membrane. This is an uncharacterized protein from Staphylococcus epidermidis (strain ATCC 35984 / DSM 28319 / BCRC 17069 / CCUG 31568 / BM 3577 / RP62A).